Here is a 677-residue protein sequence, read N- to C-terminus: Opioid growth factor receptor (677 aa).

Methionine 1 is modified (N-acetylmethionine). Residues 1–29 are compositionally biased toward acidic residues; that stretch reads MDDPDCDSTWEEDEEDAEDAEDEDCEDGE. A disordered region spans residues 1 to 63; sequence MDDPDCDSTW…SSFQSRMTGS (63 aa). The segment covering 54 to 63 has biased composition (polar residues); it reads SSFQSRMTGS. The Bipartite nuclear localization signal motif lies at 267 to 283; that stretch reads RRQLVHFAWEHFRPRCK. Positions 295–407 are disordered; the sequence is FKPSSLPHPL…EPGPQSASEV (113 aa). Phosphoserine occurs at positions 299 and 315. Basic and acidic residues-rich tracts occupy residues 305 to 323 and 331 to 345; these read EGSRKVEEEGSPGDPDHEA and GPEHSKGGGRVDEGP. 6 positions are modified to phosphoserine: serine 349, serine 361, serine 378, serine 382, serine 403, and serine 420. Residues 361-395 show a composition bias toward basic and acidic residues; sequence SQGDEAGGHGEDRPEPLSPKESKKRKLELSRREQP. A compositionally biased stretch (polar residues) spans 421 to 431; that stretch reads QGSLRTGTQEV. The segment at 421–677 is disordered; the sequence is QGSLRTGTQE…VESSAKSGKP (257 aa). The segment covering 466 to 476 has biased composition (low complexity); sequence GDSAAVASGGA. Serine 484 is modified (phosphoserine). 7 repeat units span residues 517 to 536, 537 to 556, 557 to 576, 577 to 596, 597 to 616, 617 to 636, and 637 to 656. The segment at 517–656 is 7 X 20 AA approximate tandem repeats of [ST]-P-S-E-T-P-G-P-[SR]-P-A-G-P-[AT]-[GR]-D-E-P-A-[EK]; the sequence is SPSETPGPSP…AGPTRDEPAK (140 aa). The segment covering 528 to 538 has biased composition (low complexity); the sequence is GPAGDEPAESP. Phosphoserine is present on residues serine 537 and serine 557. Residues serine 617 and serine 637 each carry the phosphoserine modification.

This sequence belongs to the opioid growth factor receptor family. As to expression, highly expressed in the heart and liver, moderately in skeletal muscle and kidney and to a lesser extent in brain and pancreas. Expressed in fetal tissues including liver and kidney.

The protein resides in the cytoplasm. Its subcellular location is the nucleus. Functionally, receptor for opioid growth factor (OGF), also known as Met-enkephalin. Seems to be involved in growth regulation. This is Opioid growth factor receptor (OGFR) from Homo sapiens (Human).